The sequence spans 132 residues: MSSKASKAPASKAPAEKKPAAKKTSSSVDASKKRTKTRKETYSSYIYKVLKQTHPDTGISQKSMSILNSFVNDIFERIASEASKLAAYNKKSTISAREIQTAVRLILPGELAKHAVSEGTRAVTKYSSSTQA.

Low complexity predominate over residues 1–13 (MSSKASKAPASKA). The tract at residues 1–40 (MSSKASKAPASKAPAEKKPAAKKTSSSVDASKKRTKTRKE) is disordered. Lysine 7 bears the N6-acetyllysine; alternate mark. Lysine 7 is covalently cross-linked (Glycyl lysine isopeptide (Lys-Gly) (interchain with G-Cter in SUMO); alternate). The residue at position 11 (serine 11) is a Phosphoserine. At lysine 12 the chain carries N6-acetyllysine. Lysine 17 carries the post-translational modification N6-acetyllysine; alternate. A Glycyl lysine isopeptide (Lys-Gly) (interchain with G-Cter in SUMO); alternate cross-link involves residue lysine 17. A Glycyl lysine isopeptide (Lys-Gly) (interchain with G-Cter in SUMO) cross-link involves residue lysine 18. Residue lysine 125 forms a Glycyl lysine isopeptide (Lys-Gly) (interchain with G-Cter in ubiquitin) linkage.

The protein belongs to the histone H2B family. The nucleosome is a histone octamer containing two molecules each of H2A, H2B, H3 and H4 assembled in one H3-H4 heterotetramer and two H2A-H2B heterodimers. The octamer wraps approximately 147 bp of DNA. Post-translationally, monoubiquitinated by the UBC2-BRE1 complex to form H2BK123ub1. H2BK123ub1 gives a specific tag for epigenetic transcriptional activation and is also prerequisite for H3K4me and H3K79me formation. H2BK123ub1 also modulates the formation of double-strand breaks during meiosis and is a prerequisite for DNA-damage checkpoint activation. Phosphorylated by STE20 to form H2BS10ph during progression through meiotic prophase. May be correlated with chromosome condensation. In terms of processing, acetylated by GCN5 to form H2BK11ac and H2BK16ac. H2BK16ac can also be formed by ESA1. Acetylation of N-terminal lysines and particularly formation of H2BK11acK16ac has a positive effect on transcription. Post-translationally, sumoylation to form H2BK6su and probably also H2BK16su or H2BK17su, occurs preferentially near the telomeres and represses gene transcription.

It localises to the nucleus. The protein localises to the chromosome. In terms of biological role, core component of nucleosome. Nucleosomes wrap and compact DNA into chromatin, limiting DNA accessibility to the cellular machineries which require DNA as a template. Histones thereby play a central role in transcription regulation, DNA repair, DNA replication and chromosomal stability. DNA accessibility is regulated via a complex set of post-translational modifications of histones, also called histone code, and nucleosome remodeling. This Eremothecium gossypii (strain ATCC 10895 / CBS 109.51 / FGSC 9923 / NRRL Y-1056) (Yeast) protein is Histone H2B.1 (HTB1).